A 207-amino-acid polypeptide reads, in one-letter code: Casparian strip membrane protein 3 (207 aa).

Over 1–45 (MDSTKSTEETAINIPRESSSTKHKIAVAAVKAVATPHKRGGMKRG) the chain is Cytoplasmic. The helical transmembrane segment at 46–66 (VAIFDFILRICALAAALAATA) threads the bilayer. Residues 67 to 95 (TMGTTDQTLPFFTQFFQFQASYDDLPTFT) lie on the Extracellular side of the membrane. Residues 96–116 (FFVIANAIASGYLVLSLPFSI) traverse the membrane as a helical segment. Residues 117 to 128 (VAIVRPHVTGVK) lie on the Cytoplasmic side of the membrane. The helical transmembrane segment at 129–149 (LLLLILDTVLVAFTTAAAASA) threads the bilayer. Over 150–181 (AAIVYLAHNGNSNTNWFAICQQFNDFCQRTSG) the chain is Extracellular. Residues 182-202 (AVVASFIAAAIFIFLVVLSAV) form a helical membrane-spanning segment. Topologically, residues 203–207 (ALRRH) are cytoplasmic.

Belongs to the Casparian strip membrane proteins (CASP) family. As to quaternary structure, homodimer and heterodimers.

Its subcellular location is the cell membrane. Regulates membrane-cell wall junctions and localized cell wall deposition. Required for establishment of the Casparian strip membrane domain (CSD) and the subsequent formation of Casparian strips, a cell wall modification of the root endodermis that determines an apoplastic barrier between the intraorganismal apoplasm and the extraorganismal apoplasm and prevents lateral diffusion. The protein is Casparian strip membrane protein 3 of Erythranthe guttata (Yellow monkey flower).